Reading from the N-terminus, the 190-residue chain is Crossover junction endodeoxyribonuclease RuvC (190 aa).

Active-site residues include D8, E67, and D139. D8, E67, and D139 together coordinate Mg(2+).

The protein belongs to the RuvC family. In terms of assembly, homodimer which binds Holliday junction (HJ) DNA. The HJ becomes 2-fold symmetrical on binding to RuvC with unstacked arms; it has a different conformation from HJ DNA in complex with RuvA. In the full resolvosome a probable DNA-RuvA(4)-RuvB(12)-RuvC(2) complex forms which resolves the HJ. It depends on Mg(2+) as a cofactor.

Its subcellular location is the cytoplasm. It carries out the reaction Endonucleolytic cleavage at a junction such as a reciprocal single-stranded crossover between two homologous DNA duplexes (Holliday junction).. Its function is as follows. The RuvA-RuvB-RuvC complex processes Holliday junction (HJ) DNA during genetic recombination and DNA repair. Endonuclease that resolves HJ intermediates. Cleaves cruciform DNA by making single-stranded nicks across the HJ at symmetrical positions within the homologous arms, yielding a 5'-phosphate and a 3'-hydroxyl group; requires a central core of homology in the junction. The consensus cleavage sequence is 5'-(A/T)TT(C/G)-3'. Cleavage occurs on the 3'-side of the TT dinucleotide at the point of strand exchange. HJ branch migration catalyzed by RuvA-RuvB allows RuvC to scan DNA until it finds its consensus sequence, where it cleaves and resolves the cruciform DNA. The protein is Crossover junction endodeoxyribonuclease RuvC of Actinobacillus succinogenes (strain ATCC 55618 / DSM 22257 / CCUG 43843 / 130Z).